A 184-amino-acid chain; its full sequence is Holliday junction branch migration complex subunit RuvA (184 aa).

The interval 1 to 64 is domain I; that stretch reads MIVAVEGIIT…EDADLLYGFL (64 aa). The interval 65–145 is domain II; it reads DEKEKRMFEM…ANDGEQYKIE (81 aa). Residue Glu145 is a region of interest, flexible linker. The interval 145–184 is domain III; it reads ETISALENLGFKRDKINKILLNCKSTNTADLIKEALKKLA.

This sequence belongs to the RuvA family. As to quaternary structure, homotetramer. Forms an RuvA(8)-RuvB(12)-Holliday junction (HJ) complex. HJ DNA is sandwiched between 2 RuvA tetramers; dsDNA enters through RuvA and exits via RuvB. An RuvB hexamer assembles on each DNA strand where it exits the tetramer. Each RuvB hexamer is contacted by two RuvA subunits (via domain III) on 2 adjacent RuvB subunits; this complex drives branch migration. In the full resolvosome a probable DNA-RuvA(4)-RuvB(12)-RuvC(2) complex forms which resolves the HJ.

Its subcellular location is the cytoplasm. In terms of biological role, the RuvA-RuvB-RuvC complex processes Holliday junction (HJ) DNA during genetic recombination and DNA repair, while the RuvA-RuvB complex plays an important role in the rescue of blocked DNA replication forks via replication fork reversal (RFR). RuvA specifically binds to HJ cruciform DNA, conferring on it an open structure. The RuvB hexamer acts as an ATP-dependent pump, pulling dsDNA into and through the RuvAB complex. HJ branch migration allows RuvC to scan DNA until it finds its consensus sequence, where it cleaves and resolves the cruciform DNA. The sequence is that of Holliday junction branch migration complex subunit RuvA from Campylobacter hominis (strain ATCC BAA-381 / DSM 21671 / CCUG 45161 / LMG 19568 / NCTC 13146 / CH001A).